Consider the following 201-residue polypeptide: uncharacterized protein (201 aa).

Belongs to the phosphatidylethanolamine-binding protein family.

This is an uncharacterized protein from Saccharomyces cerevisiae (strain ATCC 204508 / S288c) (Baker's yeast).